We begin with the raw amino-acid sequence, 211 residues long: B3 domain-containing protein At5g42700 (211 aa).

A DNA-binding region (TF-B3) is located at residues 110–201 (FVKSMLQSHV…AFKVYITRVG (92 aa)).

It is found in the nucleus. This Arabidopsis thaliana (Mouse-ear cress) protein is B3 domain-containing protein At5g42700.